The primary structure comprises 572 residues: Arginine--tRNA ligase (572 aa).

The 'HIGH' region motif lies at 122–132 (PNLAKEMHVGH).

This sequence belongs to the class-I aminoacyl-tRNA synthetase family. Monomer.

It localises to the cytoplasm. It carries out the reaction tRNA(Arg) + L-arginine + ATP = L-arginyl-tRNA(Arg) + AMP + diphosphate. In Neisseria meningitidis serogroup B (strain ATCC BAA-335 / MC58), this protein is Arginine--tRNA ligase.